The chain runs to 515 residues: Gap junction alpha-9 protein (515 aa).

At 1-19 the chain is on the cytoplasmic side; the sequence is MGDWNLLGDTLEEVHIHST. Residues 20 to 40 form a helical membrane-spanning segment; it reads MIGKIWLTILFIFRMLVLGVA. At 41 to 77 the chain is on the extracellular side; the sequence is AEDVWNDEQSGFICNTEQPGCRNVCYDQAFPISLIRY. Residues 78–98 form a helical membrane-spanning segment; sequence WVLQVIFVSSPSLVYMGHALY. Topologically, residues 99-166 are cytoplasmic; the sequence is RLRVLEEERQ…YVIHIFTRSV (68 aa). A helical membrane pass occupies residues 167–187; sequence VEVGFMIGQYLLYGFHLEPLF. Over 188-209 the chain is Extracellular; that stretch reads KCHGHPCPNIIDCFVSRPTEKT. The chain crosses the membrane as a helical span at residues 210–230; the sequence is IFLLFMQSIATISLFLNILEI. At 231–515 the chain is on the cytoplasmic side; the sequence is FHLGFKKIKR…GRRVPTDLQI (285 aa). Positions 370 to 380 are enriched in basic and acidic residues; that stretch reads KRETEGKDSKR. Disordered stretches follow at residues 370–400 and 428–472; these read KRETEGKDSKRNYYSRGHRSIPGVAIDGENN and SSTE…NTAD. Residues 456–472 are compositionally biased toward polar residues; the sequence is PPSQGDSQSLDIPNTAD.

It belongs to the connexin family. Alpha-type (group II) subfamily. A connexon is composed of a hexamer of connexins. In terms of tissue distribution, highly abundant in skeletal muscle. Also detected in testis.

It localises to the cell membrane. The protein resides in the cell junction. Its subcellular location is the gap junction. In terms of biological role, one gap junction consists of a cluster of closely packed pairs of transmembrane channels, the connexons, through which materials of low MW diffuse from one cell to a neighboring cell. The chain is Gap junction alpha-9 protein (GJA9) from Homo sapiens (Human).